Here is a 399-residue protein sequence, read N- to C-terminus: UDP-galactopyranose mutase (399 aa).

The FAD site is built by Phe-18, Glu-38, Asn-46, and Leu-66. 4 residues coordinate UDP-alpha-D-galactose: Phe-157, Thr-162, Trp-166, and Tyr-191. 224–225 (DW) serves as a coordination point for FAD. Asn-282, Arg-292, and Tyr-328 together coordinate UDP-alpha-D-galactose. Residue Arg-360 coordinates FAD. Tyr-366 is a binding site for UDP-alpha-D-galactose. FAD is bound at residue 367–369 (LDM).

This sequence belongs to the UDP-galactopyranose/dTDP-fucopyranose mutase family. Homotetramer. Requires FAD as cofactor.

It carries out the reaction UDP-alpha-D-galactose = UDP-alpha-D-galactofuranose. Its pathway is cell wall biogenesis; cell wall polysaccharide biosynthesis. Catalyzes the interconversion through a 2-keto intermediate of uridine diphosphogalactopyranose (UDP-GalP) into uridine diphosphogalactofuranose (UDP-GalF) which is a key building block for cell wall construction in Mycobacterium tuberculosis. This Mycobacterium tuberculosis (strain CDC 1551 / Oshkosh) protein is UDP-galactopyranose mutase (glf).